Here is a 176-residue protein sequence, read N- to C-terminus: ADP-ribosylation factor-like protein 11 (176 aa).

Gly2 carries the N-myristoyl glycine lipid modification. GTP contacts are provided by residues 19–26 (GLDSAGKT), 63–67 (DIGGQ), and 122–125 (NKQE).

Belongs to the small GTPase superfamily. Arf family.

In terms of biological role, may play a role in apoptosis. May act as a tumor suppressor. The sequence is that of ADP-ribosylation factor-like protein 11 (Arl11) from Mus musculus (Mouse).